The sequence spans 486 residues: Ribosome biogenesis protein YTM1 (486 aa).

Residues 12–99 are ubiquitin-like (UBL) domain; sequence RQLPINLFTR…ESQIDVEYVR (88 aa). WD repeat units lie at residues 212 to 251, 305 to 345, 349 to 388, 392 to 432, and 454 to 486; these read GHTGPISSVIASSSGKEIVTGSWDGNINLYVLPDAEPTEH, GHTG…AGAL, PFDKSALCVDQWKMNGTLATGNMDRTICLWDTRQATSLIS, PTTS…TALF, and VLGERLLAVDWNGEVLVAGGEDGEVGIWRARGE. The segment at 249–299 is disordered; the sequence is TEHQVPADPVSYLPGQGTKKRRKLEKDQEKAPIEGLTDGDATGEGGWRRAP.

It belongs to the WD repeat WDR12/YTM1 family. As to quaternary structure, component of the NOP7 complex, composed of ERB1, NOP7 and YTM1. The complex is held together by ERB1, which interacts with NOP7 via its N-terminal domain and with YTM1 via a high-affinity interaction between the seven-bladed beta-propeller domains of the 2 proteins. The NOP7 complex associates with the 66S pre-ribosome. Interacts (via UBL domain) with MDN1 (via VWFA/MIDAS domain).

The protein resides in the nucleus. The protein localises to the nucleolus. Its subcellular location is the nucleoplasm. Functionally, component of the NOP7 complex, which is required for maturation of the 25S and 5.8S ribosomal RNAs and formation of the 60S ribosome. This is Ribosome biogenesis protein YTM1 from Cryptococcus neoformans var. neoformans serotype D (strain B-3501A) (Filobasidiella neoformans).